The following is a 337-amino-acid chain: Lipoyl synthase (337 aa).

Residues Cys-81, Cys-86, Cys-92, Cys-107, Cys-111, Cys-114, and Ser-323 each contribute to the [4Fe-4S] cluster site. Residues 93–312 enclose the Radical SAM core domain; sequence FSHGTATFMI…EDYGNALGFS (220 aa).

The protein belongs to the radical SAM superfamily. Lipoyl synthase family. It depends on [4Fe-4S] cluster as a cofactor.

The protein resides in the cytoplasm. It catalyses the reaction [[Fe-S] cluster scaffold protein carrying a second [4Fe-4S](2+) cluster] + N(6)-octanoyl-L-lysyl-[protein] + 2 oxidized [2Fe-2S]-[ferredoxin] + 2 S-adenosyl-L-methionine + 4 H(+) = [[Fe-S] cluster scaffold protein] + N(6)-[(R)-dihydrolipoyl]-L-lysyl-[protein] + 4 Fe(3+) + 2 hydrogen sulfide + 2 5'-deoxyadenosine + 2 L-methionine + 2 reduced [2Fe-2S]-[ferredoxin]. It functions in the pathway protein modification; protein lipoylation via endogenous pathway; protein N(6)-(lipoyl)lysine from octanoyl-[acyl-carrier-protein]: step 2/2. Catalyzes the radical-mediated insertion of two sulfur atoms into the C-6 and C-8 positions of the octanoyl moiety bound to the lipoyl domains of lipoate-dependent enzymes, thereby converting the octanoylated domains into lipoylated derivatives. The chain is Lipoyl synthase from Xanthomonas axonopodis pv. citri (strain 306).